We begin with the raw amino-acid sequence, 328 residues long: Tetraacyldisaccharide 4'-kinase (328 aa).

58 to 65 (TMGGAGKT) lines the ATP pocket.

This sequence belongs to the LpxK family.

It carries out the reaction a lipid A disaccharide + ATP = a lipid IVA + ADP + H(+). Its pathway is glycolipid biosynthesis; lipid IV(A) biosynthesis; lipid IV(A) from (3R)-3-hydroxytetradecanoyl-[acyl-carrier-protein] and UDP-N-acetyl-alpha-D-glucosamine: step 6/6. In terms of biological role, transfers the gamma-phosphate of ATP to the 4'-position of a tetraacyldisaccharide 1-phosphate intermediate (termed DS-1-P) to form tetraacyldisaccharide 1,4'-bis-phosphate (lipid IVA). The protein is Tetraacyldisaccharide 4'-kinase of Phenylobacterium zucineum (strain HLK1).